A 372-amino-acid chain; its full sequence is Stress-activated protein kinase JNK (372 aa).

Residues 24 to 320 enclose the Protein kinase domain; it reads YINLRPIGSG…VDEALKHEYI (297 aa). Residues 31-36 and K53 contribute to the ATP site; that span reads GSGAQG. The active-site Proton acceptor is the D149. Position 181 is a phosphothreonine (T181). A TXY motif is present at residues 181–183; the sequence is TPY. At Y183 the chain carries Phosphotyrosine.

The protein belongs to the protein kinase superfamily. CMGC Ser/Thr protein kinase family. MAP kinase subfamily. Interacts with MKP-4 (via tyrosine-protein phosphatase domain); the interaction dephosphorylates bsk. Mg(2+) is required as a cofactor. Post-translationally, dually phosphorylated on Thr-181 and Tyr-183, which activates the enzyme. As to expression, during gastrulation, expression is seen in cells undergoing morphogenetic movements. By stage 9 of embryonic development, expression is ubiquitous. At stages 12-14, expression occurs in epidermis and central nervous system. At stage 15, expression is restricted to ventral nerve cord, brain and some peripheral neurons. In larvae, expression is seen in all imaginal disks, with highest levels in wing and eye disks, and in the CNS. Adults express the protein in fat body and hemocytes.

It is found in the nucleus. Its subcellular location is the cytoplasm. It carries out the reaction L-seryl-[protein] + ATP = O-phospho-L-seryl-[protein] + ADP + H(+). It catalyses the reaction L-threonyl-[protein] + ATP = O-phospho-L-threonyl-[protein] + ADP + H(+). With respect to regulation, activated by threonine and tyrosine phosphorylation by the dual specificity kinase, hep. Inhibited by dual specificity phosphatase, puckered. In terms of biological role, mitogen-activated protein kinase and key component of the c-Jun N-terminal kinase (JNK) pathway which phosphorylate and activate transcription factors involved in a wide range of biological processes including response to various stresses, cellular proliferation, differentiation and migration, and regulation of cell shape. Responds to activation by environmental stress by phosphorylating a number of transcription factors, primarily components of AP-1 such as Jra and also the transcriptional repressor aop, and thus regulates transcriptional activity. Component of the immune response activated by bacterial infection, and is involved in wound healing and in dorsal closure, a morphogenetic movement during embryogenesis. Functions in the systematic response to wounding acting downstream of the Hayan-phenoloxidase PPO1 cascade. During epidermal wound healing involved in cellular polarization by inducing the translocation of sktl and mys/integrin beta to the trailing edge. Exhibits cytoprotective activity in neuronal cells in response to wounding to the integument. Controls the expression of a phosphatase, puckered, at the edges of wounded epidermal tissue and in the dorsal epithelium during dorsal closure. Regulates the activity of SREBP in neurons and thereby the accumulation of lipids in glia. Plays a role in positively regulating the expression of DIP2 independently of AP-1, thereby ensuring proper axon guidance in mushroom bodies. In enterocytes and differentiating progenitors of the gut that are experiencing inorganic phosphate (Pi) deficiency, activated by Cka to induce nearby progenitor cells to proliferate and form new absorptive cells, probably helping the organism to cope with the nutrient deficiency by maximizing absorption of dietary Pi. The chain is Stress-activated protein kinase JNK from Drosophila melanogaster (Fruit fly).